A 341-amino-acid polypeptide reads, in one-letter code: S-adenosylmethionine:tRNA ribosyltransferase-isomerase (341 aa).

The protein belongs to the QueA family. In terms of assembly, monomer.

The protein resides in the cytoplasm. It carries out the reaction 7-aminomethyl-7-carbaguanosine(34) in tRNA + S-adenosyl-L-methionine = epoxyqueuosine(34) in tRNA + adenine + L-methionine + 2 H(+). The protein operates within tRNA modification; tRNA-queuosine biosynthesis. Functionally, transfers and isomerizes the ribose moiety from AdoMet to the 7-aminomethyl group of 7-deazaguanine (preQ1-tRNA) to give epoxyqueuosine (oQ-tRNA). The chain is S-adenosylmethionine:tRNA ribosyltransferase-isomerase from Staphylococcus aureus (strain USA300).